We begin with the raw amino-acid sequence, 81 residues long: Protein Vpu (81 aa).

The Extracellular segment spans residues 1 to 6; the sequence is MQPIQI. The chain crosses the membrane as a helical span at residues 7 to 27; the sequence is AIVALVVAIIIAIVVWSIVII. The Cytoplasmic segment spans residues 28–81; sequence EYRKILRQRKIDRLIDRLIERAEDSGNESEGEISALVEMGVEMGHHAPWDVDDL. Phosphoserine; by host CK2 occurs at positions 52 and 56.

The protein belongs to the HIV-1 VPU protein family. As to quaternary structure, homopentamer. Interacts with host CD4 and BRTC; these interactions induce proteasomal degradation of CD4. Interacts with host BST2; this interaction leads to the degradation of host BST2. Interacts with host FBXW11. Interacts with host AP1M1; this interaction plays a role in the mistrafficking and subsequent degradation of host BST2. Interacts with host RANBP2; this interaction allows Vpu to down-regulate host BLM sumoylation. Phosphorylated by host CK2. This phosphorylation is necessary for interaction with human BTRC and degradation of CD4.

Its subcellular location is the host membrane. Its activity is regulated as follows. Ion channel activity is inhibited by hexamethylene amiloride in vitro. Functionally, enhances virion budding by targeting host CD4 and Tetherin/BST2 to proteasome degradation. Degradation of CD4 prevents any unwanted premature interactions between viral Env and its host receptor CD4 in the endoplasmic reticulum. Degradation of antiretroviral protein Tetherin/BST2 is important for virion budding, as BST2 tethers new viral particles to the host cell membrane. Mechanistically, Vpu bridges either CD4 or BST2 to BTRC, a substrate recognition subunit of the Skp1/Cullin/F-box protein E3 ubiquitin ligase, induces their ubiquitination and subsequent proteasomal degradation. The alteration of the E3 ligase specificity by Vpu seems to promote the degradation of host IKBKB, leading to NF-kappa-B down-regulation and subsequent apoptosis. Acts as a viroporin that forms an oligomeric ion channel in membranes. Modulates the host DNA repair mechanisms to promote degradation of nuclear viral cDNA in cells that are already productively infected in order to suppress immune sensing and proviral hyper-integration (superinfection). Manipulates PML-NBs and modulates SUMOylation of host BLM protein thereby enhancing its DNA-end processing activity toward viral unintegrated linear DNA. Also inhibits RAD52-mediated homologous repair of viral cDNA, preventing the generation of dead-end circular forms of single copies of the long terminal repeat and permitting sustained nucleolytic attack. This is Protein Vpu from Human immunodeficiency virus type 1 group M subtype B (isolate BH10) (HIV-1).